We begin with the raw amino-acid sequence, 37 residues long: Large ribosomal subunit protein bL36 (37 aa).

The protein belongs to the bacterial ribosomal protein bL36 family.

The sequence is that of Large ribosomal subunit protein bL36 from Borreliella burgdorferi (strain ATCC 35210 / DSM 4680 / CIP 102532 / B31) (Borrelia burgdorferi).